The chain runs to 264 residues: Glutamate racemase (264 aa).

Substrate-binding positions include aspartate 10–serine 11 and tyrosine 42–glycine 43. The Proton donor/acceptor role is filled by cysteine 73. Asparagine 74–threonine 75 contacts substrate. The active-site Proton donor/acceptor is cysteine 183. Threonine 184–histidine 185 contacts substrate.

This sequence belongs to the aspartate/glutamate racemases family.

The enzyme catalyses L-glutamate = D-glutamate. The protein operates within cell wall biogenesis; peptidoglycan biosynthesis. Functionally, provides the (R)-glutamate required for cell wall biosynthesis. The protein is Glutamate racemase of Streptococcus pyogenes serotype M6 (strain ATCC BAA-946 / MGAS10394).